Reading from the N-terminus, the 840-residue chain is UPF0508 protein SCY_2952 (840 aa).

This sequence belongs to the UPF0508 family.

In Saccharomyces cerevisiae (strain YJM789) (Baker's yeast), this protein is UPF0508 protein SCY_2952.